We begin with the raw amino-acid sequence, 236 residues long: Orotidine 5'-phosphate decarboxylase (236 aa).

Substrate-binding positions include Asp-14, Lys-36, 63-72 (DLKFHDIPNT), Thr-122, Arg-183, Gln-192, Gly-212, and Arg-213. Lys-65 functions as the Proton donor in the catalytic mechanism.

Belongs to the OMP decarboxylase family. Type 1 subfamily. In terms of assembly, homodimer.

It carries out the reaction orotidine 5'-phosphate + H(+) = UMP + CO2. It participates in pyrimidine metabolism; UMP biosynthesis via de novo pathway; UMP from orotate: step 2/2. Catalyzes the decarboxylation of orotidine 5'-monophosphate (OMP) to uridine 5'-monophosphate (UMP). This is Orotidine 5'-phosphate decarboxylase from Chromohalobacter salexigens (strain ATCC BAA-138 / DSM 3043 / CIP 106854 / NCIMB 13768 / 1H11).